The sequence spans 205 residues: MQRGKFITIDGVEGAGKSTQIDFICSYLAKKNINVVLTREPGGTKLGEKIRALLLSIDTQLMDNDTELLLIFAARNEHIKTKIIPALNRGDWVLSDRFTDASYAYQGGGRGLSIERIALLEQWVLQDFSPDVTLLLDVPVALGMLRIKSRSRKDRIELETNDFFNRVRDSYIKRSKQFPERIKLIDASQTLKETTQQIKVILQAL.

11-18 (GVEGAGKS) contacts ATP.

The protein belongs to the thymidylate kinase family.

The catalysed reaction is dTMP + ATP = dTDP + ADP. Phosphorylation of dTMP to form dTDP in both de novo and salvage pathways of dTTP synthesis. This Vesicomyosocius okutanii subsp. Calyptogena okutanii (strain HA) protein is Thymidylate kinase.